The following is a 211-amino-acid chain: Mediator of RNA polymerase II transcription subunit 20 (211 aa).

It belongs to the Mediator complex subunit 20 family. Component of the Mediator complex.

It localises to the nucleus. Component of the Mediator complex, a coactivator involved in the regulated transcription of nearly all RNA polymerase II-dependent genes. Mediator functions as a bridge to convey information from gene-specific regulatory proteins to the basal RNA polymerase II transcription machinery. Mediator is recruited to promoters by direct interactions with regulatory proteins and serves as a scaffold for the assembly of a functional preinitiation complex with RNA polymerase II and the general transcription factors. The chain is Mediator of RNA polymerase II transcription subunit 20 (med20) from Xenopus laevis (African clawed frog).